A 421-amino-acid polypeptide reads, in one-letter code: UDP-N-acetylglucosamine 1-carboxyvinyltransferase 1 (421 aa).

Residue 22-23 (KN) coordinates phosphoenolpyruvate. Arg95 serves as a coordination point for UDP-N-acetyl-alpha-D-glucosamine. The Proton donor role is filled by Cys119. Cys119 bears the 2-(S-cysteinyl)pyruvic acid O-phosphothioketal mark. UDP-N-acetyl-alpha-D-glucosamine is bound by residues 124–128 (RPIEQ), Asp308, and Val330.

The protein belongs to the EPSP synthase family. MurA subfamily.

The protein localises to the cytoplasm. The enzyme catalyses phosphoenolpyruvate + UDP-N-acetyl-alpha-D-glucosamine = UDP-N-acetyl-3-O-(1-carboxyvinyl)-alpha-D-glucosamine + phosphate. Its pathway is cell wall biogenesis; peptidoglycan biosynthesis. In terms of biological role, cell wall formation. Adds enolpyruvyl to UDP-N-acetylglucosamine. This Staphylococcus aureus (strain MW2) protein is UDP-N-acetylglucosamine 1-carboxyvinyltransferase 1.